Here is a 404-residue protein sequence, read N- to C-terminus: MKLPIYLDYSATTPVDPRVAEKMMQFLTLDGTFGNPASRSHRFGWQAEEAVDIARNQISELVGADPREIVFTSGATESDNLAIKGAANFYQKKGKHIITSKTEHKAVLDTCRQLEREGFEVTYLAPQRNGIIDLNELEAAMRDDTILVSIMHVNNEIGVVQDIATIGEMCRARGIIYHVDATQSVGKLPIDLSQLKVDLMSFSGHKIYGPKGIGALYVRRKPRIRIEAQMHGGGHERGMRSGTLPVHQIVGMGEAYRIVKEEMETEMARLRGLRNRLWNGIKDIEEVYLNGDLEQGAPNILNVSFNYVEGESLIMALKDLAVSSGSACTSASLEPSYVLRALGMNDELAHSSIRFSLGRFTTEEEIDYTIDLVRKSIGRLRDLSPLWEMYKQGVDLNSIEWAHH.

Pyridoxal 5'-phosphate is bound by residues 75-76 (AT), Asn155, Gln183, and 203-205 (SGH). At Lys206 the chain carries N6-(pyridoxal phosphate)lysine. Thr243 is a binding site for pyridoxal 5'-phosphate. Cys328 serves as the catalytic Cysteine persulfide intermediate. Cys328 contacts [2Fe-2S] cluster.

The protein belongs to the class-V pyridoxal-phosphate-dependent aminotransferase family. NifS/IscS subfamily. As to quaternary structure, homodimer. Forms a heterotetramer with IscU, interacts with other sulfur acceptors. Pyridoxal 5'-phosphate serves as cofactor.

The protein resides in the cytoplasm. The enzyme catalyses (sulfur carrier)-H + L-cysteine = (sulfur carrier)-SH + L-alanine. It participates in cofactor biosynthesis; iron-sulfur cluster biosynthesis. In terms of biological role, master enzyme that delivers sulfur to a number of partners involved in Fe-S cluster assembly, tRNA modification or cofactor biosynthesis. Catalyzes the removal of elemental sulfur and selenium atoms from cysteine and selenocysteine to produce alanine. Functions as a sulfur delivery protein for Fe-S cluster synthesis onto IscU, an Fe-S scaffold assembly protein, as well as other S acceptor proteins. Also functions as a selenium delivery protein in the pathway for the biosynthesis of selenophosphate. The polypeptide is Cysteine desulfurase IscS (Salmonella paratyphi C (strain RKS4594)).